The following is a 162-amino-acid chain: uncharacterized protein (162 aa).

Pentapeptide repeat domains lie at Ala33 to Glu72, Val73 to Lys112, and Ala113 to Asp152.

This is an uncharacterized protein from Synechocystis sp. (strain ATCC 27184 / PCC 6803 / Kazusa).